The primary structure comprises 314 residues: MKRAPTKQPAKPAARGGERAQGRVIAAHGRHYIVAPADGGSMLQCFPRGKKSEVAVGDRVAYERTSADQGVIVEIGERRNLLYRSDQFKSKLFAANLDQLLIVLATEPYFSEDLLGRALIAAEANELKPIVVLNKIDVEAALPVARERLAPYRALGYDVLELSVKGAPDDARAQLAPRLAGHSTILLGQSGMGKSTLVNLLVPDAEAATREISAALNSGRHTTTFTRLYPLQDGGALIDSPGFQEFGLYHLTEGRLERAFPEFRPLLAHCRFYNCHHLHEPGCAILEALADGRIAPTRHALYAQLVHEASQIVR.

The interval Met-1–Ala-20 is disordered. The region spanning Ser-85 to Phe-246 is the CP-type G domain. GTP is bound by residues Asn-134 to Asp-137 and Gly-188 to Thr-196. Positions 270, 275, 277, and 283 each coordinate Zn(2+).

Belongs to the TRAFAC class YlqF/YawG GTPase family. RsgA subfamily. Monomer. Associates with 30S ribosomal subunit, binds 16S rRNA. Zn(2+) is required as a cofactor.

It localises to the cytoplasm. One of several proteins that assist in the late maturation steps of the functional core of the 30S ribosomal subunit. Helps release RbfA from mature subunits. May play a role in the assembly of ribosomal proteins into the subunit. Circularly permuted GTPase that catalyzes slow GTP hydrolysis, GTPase activity is stimulated by the 30S ribosomal subunit. The protein is Small ribosomal subunit biogenesis GTPase RsgA of Burkholderia pseudomallei (strain K96243).